The sequence spans 794 residues: Zinc finger and BTB domain-containing protein 17 (794 aa).

The BTB domain occupies 1–104 (MDFPQHSQRV…VASFLQMQDI (104 aa)). Residues 116–285 (EPSSTTGESA…QNLRSGTYGD (170 aa)) form a disordered region. Positions 132-142 (GGDKRAKDEKA) are enriched in basic and acidic residues. Residues 203-216 (SSMAAAEAEALSES) show a composition bias toward low complexity. A compositionally biased stretch (basic and acidic residues) spans 243-252 (VKEEGMHLDN). Over residues 254–263 (EPPEENEESA) the composition is skewed to acidic residues. The interval 260–299 (EESAGTDSGQELGMEGQNLRSGTYGDRTESKAYGSIIHKC) is interaction with MYC. 13 consecutive C2H2-type zinc fingers follow at residues 297–319 (HKCE…IRIH), 325–347 (FSCR…EKTH), 353–375 (YGCE…KKRH), 381–403 (YRCG…QLVH), 409–431 (YQCD…LETH), 437–459 (HKCP…LKIH), 465–487 (LKCR…LRIH), 493–515 (YVCT…VRIH), 519–543 (KPCQ…VRQH), 549–571 (YVCE…IRHH), 577–599 (HKCS…IIIH), 605–628 (YLCD…KTVH), and 708–730 (YACD…VRIH). A Glycyl lysine isopeptide (Lys-Gly) (interchain with G-Cter in ubiquitin) cross-link involves residue lysine 388. Residue lysine 472 forms a Glycyl lysine isopeptide (Lys-Gly) (interchain with G-Cter in ubiquitin) linkage. The interaction with MYC stretch occupies residues 628 to 709 (HQGKAGIKIL…EDPNTHILYA (82 aa)). An interaction with HCFC1 region spans residues 628–794 (HQGKAGIKIL…TAPDCLPPAE (167 aa)). Residues 769–794 (PRDGTEGQPTLAESPPTAPDCLPPAE) are disordered. Positions 784 to 794 (PTAPDCLPPAE) are enriched in pro residues.

This sequence belongs to the krueppel C2H2-type zinc-finger protein family. In terms of assembly, homooligomerizes (via the BTB/POZ domain), multimerization is required for DNA binding. Binds to the C-terminal helix-loop-helix motif of MYC which inhibits ZBTB17 transactivation and growth arrest activities and renders it insoluble in the nucleus. Also interacts with HCFC1, MAGEA4 and TMPRSS11A. Interacts (via the C-terminal zinc fingers) with GFI1; the interaction results in the recruitment of MYC to the CDKN1A/p21 and CDKN1B promoters and repression of transcription. Interacts with TRAF2, interfering with the binding of UBC13 to TRAF2, and inhibiting TRAF2 E3 ligase activity. Interacts with BCL6; the interaction inhibits ZBTB17 transactivation activity on target genes involved in cell cycle arrest. Interacts with ZBTB49; this interaction blocks ZBTB17-mediated repression of RB1. In terms of processing, undergoes 'Lys-48'-linked polyubiquitination at Lys-388 and Lys-472 and subsequent proteasomal degradation in a TRAF2-dependent manner and upon TNFA stimulation. Found in all the embryonic and adult tissues examined.

It localises to the nucleus. In terms of biological role, transcription factor that can function as an activator or repressor depending on its binding partners, and by targeting negative regulators of cell cycle progression. Has been shown to bind to the promoters of adenovirus major late protein and cyclin D1 and activate transcription. Required for early embryonic development during gastrulation. Plays a critical role in early lymphocyte development, where it is essential to prevent apoptosis in lymphoid precursors, allowing them to survive in response to IL7 and undergo proper lineage commitment. Represses RB1 transcription; this repression can be blocked by interaction with ZBTB49. This is Zinc finger and BTB domain-containing protein 17 (Zbtb17) from Mus musculus (Mouse).